Reading from the N-terminus, the 486-residue chain is H2.0-like homeobox protein (486 aa).

Disordered stretches follow at residues 83–173 and 330–486; these read ASFQ…SSKD and KWRH…LGGL. Residues 125–135 show a composition bias toward low complexity; sequence QQQQQQQQPQQ. Residues 276–335 constitute a DNA-binding region (homeobox); sequence RSWSRAVFSNLQRKGLEKRFEIQKYVTKPDRKQLAAMLGLTDAQVKVWFQNRRMKWRHSK. 2 stretches are compositionally biased toward basic and acidic residues: residues 334 to 349 and 363 to 372; these read SKEA…EAGE and EERSPSRSEG. The segment covering 373 to 383 has biased composition (acidic residues); that stretch reads EAESESSDPES. Positions 390 to 401 are enriched in basic and acidic residues; that stretch reads DTERTEGTERSL. The segment covering 409-420 has biased composition (low complexity); the sequence is ASAAGALLAASS. Residues 421–440 show a composition bias toward gly residues; the sequence is GGSGGSGGGGGGGFNFGGLS. Residues 441-474 are compositionally biased toward low complexity; the sequence is SGSTTSAGSSGSHSSGGASELLPAPQPSLSSAPK. The span at 475-486 shows a compositional bias: pro residues; sequence SPEPVPAPLGGL.

This sequence belongs to the H2.0 homeobox family.

The protein localises to the nucleus. Functionally, transcription factor required for TBX21/T-bet-dependent maturation of Th1 cells as well as maintenance of Th1-specific gene expression. Involved in embryogenesis and hematopoiesis. In Bos taurus (Bovine), this protein is H2.0-like homeobox protein (HLX).